A 48-amino-acid polypeptide reads, in one-letter code: Protein YgdT (48 aa).

This is Protein YgdT (ygdT) from Escherichia coli (strain K12).